The primary structure comprises 418 residues: 3-phosphoshikimate 1-carboxyvinyltransferase (418 aa).

Lysine 26, serine 27, and arginine 31 together coordinate 3-phosphoshikimate. Phosphoenolpyruvate is bound at residue lysine 26. Residues glycine 97 and arginine 125 each coordinate phosphoenolpyruvate. The 3-phosphoshikimate site is built by serine 170, serine 171, glutamine 172, aspartate 297, asparagine 320, and lysine 324. Residue glutamine 172 coordinates phosphoenolpyruvate. Aspartate 297 serves as the catalytic Proton acceptor. Residues arginine 328, arginine 375, and lysine 400 each contribute to the phosphoenolpyruvate site.

The protein belongs to the EPSP synthase family. In terms of assembly, monomer.

Its subcellular location is the cytoplasm. The catalysed reaction is 3-phosphoshikimate + phosphoenolpyruvate = 5-O-(1-carboxyvinyl)-3-phosphoshikimate + phosphate. Its pathway is metabolic intermediate biosynthesis; chorismate biosynthesis; chorismate from D-erythrose 4-phosphate and phosphoenolpyruvate: step 6/7. Catalyzes the transfer of the enolpyruvyl moiety of phosphoenolpyruvate (PEP) to the 5-hydroxyl of shikimate-3-phosphate (S3P) to produce enolpyruvyl shikimate-3-phosphate and inorganic phosphate. This is 3-phosphoshikimate 1-carboxyvinyltransferase from Pseudomonas savastanoi pv. phaseolicola (strain 1448A / Race 6) (Pseudomonas syringae pv. phaseolicola (strain 1448A / Race 6)).